The chain runs to 210 residues: ATP-dependent Clp protease proteolytic subunit (210 aa).

The active-site Nucleophile is the Ser-106. His-131 is a catalytic residue.

This sequence belongs to the peptidase S14 family. In terms of assembly, fourteen ClpP subunits assemble into 2 heptameric rings which stack back to back to give a disk-like structure with a central cavity, resembling the structure of eukaryotic proteasomes.

Its subcellular location is the cytoplasm. It catalyses the reaction Hydrolysis of proteins to small peptides in the presence of ATP and magnesium. alpha-casein is the usual test substrate. In the absence of ATP, only oligopeptides shorter than five residues are hydrolyzed (such as succinyl-Leu-Tyr-|-NHMec, and Leu-Tyr-Leu-|-Tyr-Trp, in which cleavage of the -Tyr-|-Leu- and -Tyr-|-Trp bonds also occurs).. In terms of biological role, cleaves peptides in various proteins in a process that requires ATP hydrolysis. Has a chymotrypsin-like activity. Plays a major role in the degradation of misfolded proteins. The polypeptide is ATP-dependent Clp protease proteolytic subunit (Afipia carboxidovorans (strain ATCC 49405 / DSM 1227 / KCTC 32145 / OM5) (Oligotropha carboxidovorans)).